A 322-amino-acid chain; its full sequence is NADH-quinone oxidoreductase subunit H (322 aa).

8 helical membrane-spanning segments follow: residues 12–32 (VGKALIVLVGIVGAGAFMSFI), 79–99 (IFILAPIIAFTAFILAFAVVP), 111–131 (VGLLYILAIAGLAVYAVLFAG), 151–171 (LSYEVFLGLSLMGIVIQTGSF), 183–203 (LWNVVPQILGFITFLFAGVAV), 234–254 (FFVGEYIGIVLISSLIVTLFF), 262–282 (LPPFIWFALKTACFMVFFILL), and 301–321 (VCLPLTLVNMLITGAVVLINV).

The protein belongs to the complex I subunit 1 family. In terms of assembly, NDH-1 is composed of 14 different subunits. Subunits NuoA, H, J, K, L, M, N constitute the membrane sector of the complex.

The protein localises to the cell inner membrane. The catalysed reaction is a quinone + NADH + 5 H(+)(in) = a quinol + NAD(+) + 4 H(+)(out). In terms of biological role, NDH-1 shuttles electrons from NADH, via FMN and iron-sulfur (Fe-S) centers, to quinones in the respiratory chain. The immediate electron acceptor for the enzyme in this species is believed to be ubiquinone. Couples the redox reaction to proton translocation (for every two electrons transferred, four hydrogen ions are translocated across the cytoplasmic membrane), and thus conserves the redox energy in a proton gradient. This subunit may bind ubiquinone. This Aeromonas salmonicida (strain A449) protein is NADH-quinone oxidoreductase subunit H.